The sequence spans 59 residues: Large ribosomal subunit protein bL32 (59 aa).

Residues 1-59 (MAVQQNKKSPSKRGMHRSHDALTAPALSVDSTTGEVHRPHHISPNGMYRGRKVVKAKGE) form a disordered region. The segment covering 49–59 (RGRKVVKAKGE) has biased composition (basic residues).

This sequence belongs to the bacterial ribosomal protein bL32 family.

The sequence is that of Large ribosomal subunit protein bL32 (rpmF) from Neisseria meningitidis serogroup B (strain ATCC BAA-335 / MC58).